The chain runs to 119 residues: DNA-binding protein inhibitor ID-3 (119 aa).

The 53-residue stretch at 28 to 80 folds into the bHLH domain; it reads RGKSPAAEEPLSLLDDMNHCYSRLRELVPGVPRGTQLSQVEILQRVIDYILDL.

As to quaternary structure, homodimer, and heterodimer with other HLH proteins. Interacts with COPS5 and COPS7A. Interacts with IFI204. Interacts with GATA4 and NKX2-5. Interacts with ANKRD2; both proteins cooperate in myoblast differentiation. Interacts with CLOCK and BMAL1.

It is found in the nucleus. Its function is as follows. Transcriptional regulator (lacking a basic DNA binding domain) which negatively regulates the basic helix-loop-helix (bHLH) transcription factors by forming heterodimers and inhibiting their DNA binding and transcriptional activity. Implicated in regulating a variety of cellular processes, including cellular growth, senescence, differentiation, apoptosis, angiogenesis, and neoplastic transformation. Involved in myogenesis by inhibiting skeletal muscle and cardiac myocyte differentiation and promoting muscle precursor cells proliferation. Inhibits the binding of E2A-containing protein complexes to muscle creatine kinase E-box enhancer. Regulates the circadian clock by repressing the transcriptional activator activity of the CLOCK-BMAL1 heterodimer. The sequence is that of DNA-binding protein inhibitor ID-3 (ID3) from Bos taurus (Bovine).